Reading from the N-terminus, the 185-residue chain is Dihydrofolate reductase 1 (185 aa).

A DHFR domain is found at 8–185 (ELVLVVAADE…QASPRPLDDL (178 aa)).

Belongs to the dihydrofolate reductase family.

The catalysed reaction is (6S)-5,6,7,8-tetrahydrofolate + NADP(+) = 7,8-dihydrofolate + NADPH + H(+). The protein operates within cofactor biosynthesis; tetrahydrofolate biosynthesis; 5,6,7,8-tetrahydrofolate from 7,8-dihydrofolate: step 1/1. In terms of biological role, key enzyme in folate metabolism. Catalyzes an essential reaction for de novo glycine and purine synthesis, and for DNA precursor synthesis. This Haloarcula marismortui (strain ATCC 43049 / DSM 3752 / JCM 8966 / VKM B-1809) (Halobacterium marismortui) protein is Dihydrofolate reductase 1 (folA1).